We begin with the raw amino-acid sequence, 229 residues long: Ribonuclease 3 (229 aa).

The RNase III domain occupies 5–127 (LARLERQLGY…LIGAIYLDAG (123 aa)). Residue Glu40 participates in Mg(2+) binding. Asp44 is an active-site residue. Asp113 and Glu116 together coordinate Mg(2+). Residue Glu116 is part of the active site. The DRBM domain occupies 154–224 (DPKTRLQEFL…AAAALIALGV (71 aa)).

This sequence belongs to the ribonuclease III family. In terms of assembly, homodimer. Requires Mg(2+) as cofactor.

The protein resides in the cytoplasm. The catalysed reaction is Endonucleolytic cleavage to 5'-phosphomonoester.. Its function is as follows. Digests double-stranded RNA. Involved in the processing of primary rRNA transcript to yield the immediate precursors to the large and small rRNAs (23S and 16S). Processes some mRNAs, and tRNAs when they are encoded in the rRNA operon. Processes pre-crRNA and tracrRNA of type II CRISPR loci if present in the organism. This chain is Ribonuclease 3, found in Pseudomonas fluorescens (strain SBW25).